Here is a 165-residue protein sequence, read N- to C-terminus: LIM domain transcription factor LMO4.2 (165 aa).

LIM zinc-binding domains follow at residues 21–83 and 85–147; these read KRCA…LFGN and GACS…ALIN.

In terms of biological role, acts as a positive cofactor of GATA transcription factors to establish the identity of the ventral mesoderm during gastrulation. Down-regulation in the dorsal mesoderm is necessary for the proper formation of this territory since, when present, lmo4 may bind ldb1 and restrict the availability of this cofactor for Spemman organizer transcription factors. At neurula stages, suppresses primary neuron differentiation and modulates gene expression at the Isthmic Organizer of the midbrain-hindbrain boundary. The chain is LIM domain transcription factor LMO4.2 (lmo4.2) from Xenopus tropicalis (Western clawed frog).